Reading from the N-terminus, the 134-residue chain is Snaclec alboaggregin-A subunit alpha' (134 aa).

The region spanning 1–134 is the C-type lectin domain; sequence DFHCLPGWSA…NPFVCKFPPQ (134 aa). 3 disulfide bridges follow: cysteine 4/cysteine 15, cysteine 32/cysteine 129, and cysteine 104/cysteine 121.

It belongs to the snaclec family. Heterotetramer of the subunits alpha, alpha', beta and beta'; disulfide-linked. In terms of tissue distribution, expressed by the venom gland.

Its subcellular location is the secreted. In terms of biological role, potent platelet activator that aggregates platelets via both GPIbalpha (GP1BA) and GPVI (GP6). Induces a tyrosine phosphorylation profile in platelets that resembles this produced by collagen, involving the time dependent tyrosine phosphorylation of Fc receptor gamma chain (FCGR1A), phospholipase Cgamma2 (PLCG2), and LAT. The chain is Snaclec alboaggregin-A subunit alpha' from Trimeresurus albolabris (White-lipped pit viper).